The primary structure comprises 1014 residues: Latrophilin-like protein 1 (1014 aa).

Residues 1 to 27 (MRRNKTTYSLLQTILVACLLTVTPTFA) form the signal peptide. Asn-4 carries N-linked (GlcNAc...) asparagine glycosylation. Residues 28–555 (SNKPTTDESG…IDQTLLTLLT (528 aa)) are Extracellular-facing. Positions 43–134 (ICDGEAAELS…KYLEVKYNCV (92 aa)) constitute an SUEL-type lectin domain. Residues 359-542 (ESNVIVQPAI…AVLMDVRGHD (184 aa)) form the GAIN-B domain. N-linked (GlcNAc...) asparagine glycans are attached at residues Asn-473 and Asn-518. 2 disulfides stabilise this stretch: Cys-497/Cys-524 and Cys-512/Cys-526. The tract at residues 497–542 (CVWWNHHELKWKPSGCKLSYHNKTMTSCDCTHLTHFAVLMDVRGHD) is GPS. The helical transmembrane segment at 556-576 (YVGCIISIICLLLTFFAYLIF) threads the bilayer. Over 577–584 (SRNGGDRV) the chain is Cytoplasmic. Residues 585 to 605 (FIHENLCLSLAIAEITFLAGI) traverse the membrane as a helical segment. The Extracellular segment spans residues 606 to 613 (TRTEDSLQ). A helical membrane pass occupies residues 614–634 (CGIIAVALMYMFLSALTWMLL). Residues 635–653 (EGYHIHRMLTEVFPSDPRR) are Cytoplasmic-facing. Residues 654–674 (FTYLLVGYIPPAIITLVAYLY) form a helical membrane-spanning segment. The Extracellular portion of the chain corresponds to 675-692 (NSDGFGTPDHCWLSTQNN). A helical membrane pass occupies residues 693–713 (FIWFFAGPACFIFCANSLVLV). The Cytoplasmic segment spans residues 714 to 745 (KTLCTVYQHTSGGYLPCRHDVDSGRSIRNWVK). The chain crosses the membrane as a helical span at residues 746 to 766 (GSLALASLLGVTWIFGLFWVE). Over 767-770 (DSRS) the chain is Extracellular. Residues 771-791 (IVMAYVFTISNSLQGLFIFLF) form a helical membrane-spanning segment. At 792–1014 (HVVFAEKMRK…NKPSMYCQDL (223 aa)) the chain is on the cytoplasmic side. Disordered stretches follow at residues 814-833 (GSSN…DLMS) and 932-994 (YQGW…EVTP). Pro residues predominate over residues 941-952 (PEFSPPPPPLST). The segment covering 965 to 986 (SGRRPPSSKMSDDSAYSDGSSS) has biased composition (low complexity).

Belongs to the G-protein coupled receptor 2 family. LN-TM7 subfamily. Monomer and homodimer. Autoproteolytically processed at the GPS region of the GAIN-B domain; this cleavage modulates receptor activity. Expressed in epidermal precursor cells and pharyngeal primordium. In adults expression is seen in pharyngeal muscle cells and nervous system, the nerve ring, the gonad, and the vulva.

It is found in the cell membrane. In terms of biological role, has a role in the establishment of anterior-posterior polarity in tissues during embryogenesis. Required for the alignment of the mitotic spindles and division planes. May have a role in cell death events. Required for normal defection and oocyte fertilization. Involved in sperm function. Operates in pharyngeal pumping during feeding. This Caenorhabditis elegans protein is Latrophilin-like protein 1.